Consider the following 202-residue polypeptide: Histone H1 (202 aa).

2 disordered regions span residues Met-1 to Pro-50 and Tyr-114 to Val-202. Residues Glu-18–Glu-38 show a composition bias toward basic and acidic residues. The H15 domain occupies Thr-48–Glu-118. The span at Lys-160–Val-202 shows a compositional bias: basic residues.

The protein belongs to the histone H1/H5 family.

Its subcellular location is the nucleus. The protein localises to the chromosome. Functionally, histones H1 are necessary for the condensation of nucleosome chains into higher-order structures. In Solanum pennellii (Tomato), this protein is Histone H1.